Here is a 124-residue protein sequence, read N- to C-terminus: UPF0235 protein (124 aa).

The interval 1–22 (MTKKGSSNSSKQQQQQQQIIIN) is disordered.

This sequence belongs to the UPF0235 family.

In Dictyostelium discoideum (Social amoeba), this protein is UPF0235 protein.